The following is a 1069-amino-acid chain: Protocadherin-8 (1069 aa).

The N-terminal stretch at 1-29 (MSPVKRWGSPCLFPLQLFSLCWVLSVAQS) is a signal peptide. Cadherin domains lie at 30–135 (KTVR…APRF), 136–245 (PRAQ…SPAF), 247–354 (QGAV…APDI), 393–497 (QETG…APLF), 498–609 (TKPV…SPVL), and 615–721 (ANGS…VPAS). Residues 30 to 747 (KTVRYSTFEE…SGPSLQWDTP (718 aa)) are Extracellular-facing. Residue N616 is glycosylated (N-linked (GlcNAc...) asparagine). Residues 719–738 (PASAGSPEHFRPPGSRLAPS) are disordered. A helical membrane pass occupies residues 748 to 768 (LIVIIVLAGSCTLLLAAIIAI). At 769–1069 (ATTCNRRKKE…SPKKGTNENV (301 aa)) the chain is on the cytoplasmic side. Disordered stretches follow at residues 777 to 859 (KEVR…TGES), 905 to 927 (REAE…DSDS), and 1031 to 1069 (LSPP…NENV). 2 stretches are compositionally biased toward basic and acidic residues: residues 780 to 790 (RKGGALREERP) and 905 to 920 (REAE…KGDS). S1052 is subject to Phosphoserine.

As to quaternary structure, the N-terminal extracellular domain forms homophilic interactions; these interactions activate p38 MAPK via TAOK2 and trigger endocytosis. Interacts with CDH2; this interaction may lead to CDH2 cointernalization. Interacts with CDH11. Interacts with TAOK2. As to expression, enriched in brain relative to peripheral tissues, with low expression in the testis. Expressed in hippocampal neurons (at protein level).

It localises to the cell membrane. Its subcellular location is the cell projection. The protein localises to the dendrite. It is found in the presynaptic cell membrane. The protein resides in the postsynaptic cell membrane. Its function is as follows. Calcium-dependent cell-adhesion protein. May play a role in activity-induced synaptic reorganization underlying long term memory. Could be involved in CDH2 internalization through TAOK2/p38 MAPK pathway. In hippocampal neurons, may play a role in the down-regulation of dendritic spines, maybe through its action on CDH2 endocytosis. The sequence is that of Protocadherin-8 (Pcdh8) from Rattus norvegicus (Rat).